The following is a 310-amino-acid chain: Protoheme IX farnesyltransferase (310 aa).

A run of 9 helical transmembrane segments spans residues 26 to 45, 49 to 71, 95 to 115, 118 to 138, 147 to 167, 174 to 194, 220 to 240, 243 to 263, and 289 to 309; these read VMSL…PVTV, IALT…NMWW, GEAL…LGLA, LFAA…YSMW, IVIG…VATG, LFMF…LALF, VLVY…TGIG, LYLA…VRIW, and LFLH…GLGG.

The protein belongs to the UbiA prenyltransferase family. Protoheme IX farnesyltransferase subfamily. Interacts with CtaA.

It localises to the cell inner membrane. It catalyses the reaction heme b + (2E,6E)-farnesyl diphosphate + H2O = Fe(II)-heme o + diphosphate. The protein operates within porphyrin-containing compound metabolism; heme O biosynthesis; heme O from protoheme: step 1/1. In terms of biological role, converts heme B (protoheme IX) to heme O by substitution of the vinyl group on carbon 2 of heme B porphyrin ring with a hydroxyethyl farnesyl side group. This chain is Protoheme IX farnesyltransferase, found in Cereibacter sphaeroides (strain ATCC 17029 / ATH 2.4.9) (Rhodobacter sphaeroides).